The primary structure comprises 348 residues: Lipoyl synthase (348 aa).

Positions 1 to 45 (MSESAKPRITSGSKFRNEHGFSAIKDGVKRSSSNTEGKSLERKPK) are disordered. Residues Cys73, Cys78, Cys84, Cys99, Cys103, Cys106, and Ser314 each coordinate [4Fe-4S] cluster. The Radical SAM core domain maps to 85-303 (WTNGTATIMV…RDIGLEKGFM (219 aa)).

Belongs to the radical SAM superfamily. Lipoyl synthase family. The cofactor is [4Fe-4S] cluster.

The protein resides in the cytoplasm. It carries out the reaction [[Fe-S] cluster scaffold protein carrying a second [4Fe-4S](2+) cluster] + N(6)-octanoyl-L-lysyl-[protein] + 2 oxidized [2Fe-2S]-[ferredoxin] + 2 S-adenosyl-L-methionine + 4 H(+) = [[Fe-S] cluster scaffold protein] + N(6)-[(R)-dihydrolipoyl]-L-lysyl-[protein] + 4 Fe(3+) + 2 hydrogen sulfide + 2 5'-deoxyadenosine + 2 L-methionine + 2 reduced [2Fe-2S]-[ferredoxin]. It participates in protein modification; protein lipoylation via endogenous pathway; protein N(6)-(lipoyl)lysine from octanoyl-[acyl-carrier-protein]: step 2/2. Its function is as follows. Catalyzes the radical-mediated insertion of two sulfur atoms into the C-6 and C-8 positions of the octanoyl moiety bound to the lipoyl domains of lipoate-dependent enzymes, thereby converting the octanoylated domains into lipoylated derivatives. This is Lipoyl synthase from Marinobacter nauticus (strain ATCC 700491 / DSM 11845 / VT8) (Marinobacter aquaeolei).